The chain runs to 300 residues: Cation-efflux pump FieF (300 aa).

4 consecutive transmembrane segments (helical) span residues 12 to 32 (AAIA…FAWW), 39 to 59 (ILAA…NLLV), 82 to 102 (AALA…LTGI), and 114 to 134 (PGVG…LVSF). Zn(2+) is bound by residues aspartate 45 and aspartate 49. Zn(2+) is bound by residues histidine 153 and aspartate 157. Helical transmembrane passes span 156-176 (SDVM…YGWH) and 178-198 (ADAL…LRMG).

This sequence belongs to the cation diffusion facilitator (CDF) transporter (TC 2.A.4) family. FieF subfamily. In terms of assembly, homodimer.

The protein localises to the cell inner membrane. It catalyses the reaction Zn(2+)(in) + H(+)(out) = Zn(2+)(out) + H(+)(in). The catalysed reaction is Cd(2+)(in) + H(+)(out) = Cd(2+)(out) + H(+)(in). It carries out the reaction Fe(2+)(in) + H(+)(out) = Fe(2+)(out) + H(+)(in). In terms of biological role, divalent metal cation transporter which exports Zn(2+), Cd(2+) and possibly Fe(2+). May be involved in zinc and iron detoxification by efflux. In Escherichia coli O7:K1 (strain IAI39 / ExPEC), this protein is Cation-efflux pump FieF.